We begin with the raw amino-acid sequence, 274 residues long: Diaminopimelate epimerase (274 aa).

Positions 11, 44, and 64 each coordinate substrate. Cys73 serves as the catalytic Proton donor. Substrate is bound by residues 74-75 (GN), Asn157, Asn190, and 208-209 (ER). Cys217 acts as the Proton acceptor in catalysis. 218-219 (GS) contributes to the substrate binding site.

Belongs to the diaminopimelate epimerase family. As to quaternary structure, homodimer.

It is found in the cytoplasm. The enzyme catalyses (2S,6S)-2,6-diaminopimelate = meso-2,6-diaminopimelate. It participates in amino-acid biosynthesis; L-lysine biosynthesis via DAP pathway; DL-2,6-diaminopimelate from LL-2,6-diaminopimelate: step 1/1. In terms of biological role, catalyzes the stereoinversion of LL-2,6-diaminopimelate (L,L-DAP) to meso-diaminopimelate (meso-DAP), a precursor of L-lysine and an essential component of the bacterial peptidoglycan. This chain is Diaminopimelate epimerase, found in Haemophilus ducreyi (strain 35000HP / ATCC 700724).